A 425-amino-acid chain; its full sequence is UPF0597 protein UNCMA_16400 (425 aa).

This sequence belongs to the UPF0597 family.

This Methanocella arvoryzae (strain DSM 22066 / NBRC 105507 / MRE50) protein is UPF0597 protein UNCMA_16400.